We begin with the raw amino-acid sequence, 280 residues long: Phosphonates import ATP-binding protein PhnC 1 (280 aa).

The 245-residue stretch at 2 to 246 (LRIENLDKRY…VLTRIYGEED (245 aa)) folds into the ABC transporter domain. Residue 35–42 (GPSGAGKS) coordinates ATP. Residues 247-266 (WSKTSDEDADSVDAPPRAAD) are disordered.

The protein belongs to the ABC transporter superfamily. Phosphonates importer (TC 3.A.1.9.1) family. As to quaternary structure, the complex is composed of two ATP-binding proteins (PhnC), two transmembrane proteins (PhnE) and a solute-binding protein (PhnD).

The protein localises to the cell inner membrane. It catalyses the reaction phosphonate(out) + ATP + H2O = phosphonate(in) + ADP + phosphate + H(+). Part of the ABC transporter complex PhnCDE involved in phosphonates import. Responsible for energy coupling to the transport system. In Rhodopseudomonas palustris (strain HaA2), this protein is Phosphonates import ATP-binding protein PhnC 1.